Consider the following 739-residue polypeptide: Transcription activator of gluconeogenesis MCYG_04674 (739 aa).

Residues 1 to 33 (MSPHQTTGQESDNMAVNGENAQASSQYIQLNSE) are compositionally biased toward polar residues. Residues 1–62 (MSPHQTTGQE…PSRPKRKKAK (62 aa)) are disordered. A compositionally biased stretch (basic and acidic residues) spans 40–55 (AAEKKAAAAKAKDPSR). Positions 65-93 (CYACQRGHLTCGDERPCQRCIKRGFQDAC) form a DNA-binding region, zn(2)-C6 fungal-type. Disordered stretches follow at residues 174-223 (GPEN…QFNS), 264-308 (DTPP…GDSG), 380-420 (SRQN…HKNA), 537-574 (NHNV…STTA), and 639-668 (AQNN…GQRR). 2 stretches are compositionally biased toward polar residues: residues 267–284 (PSDN…SSGT) and 397–411 (PVVS…NLNI). Over residues 547–557 (GLLTGSTSRGS) the composition is skewed to low complexity. Positions 562–574 (PYSSDQFNSSTTA) are enriched in polar residues. The span at 653–664 (NSSSNGTTSTGR) shows a compositional bias: low complexity.

This sequence belongs to the ERT1/acuK family.

The protein resides in the nucleus. Its function is as follows. Transcription factor which regulates nonfermentable carbon utilization. Activator of gluconeogenetic genes. In Arthroderma otae (strain ATCC MYA-4605 / CBS 113480) (Microsporum canis), this protein is Transcription activator of gluconeogenesis MCYG_04674.